We begin with the raw amino-acid sequence, 665 residues long: Fructose-1,6-bisphosphatase class 3 (665 aa).

It belongs to the FBPase class 3 family. It depends on Mn(2+) as a cofactor.

The enzyme catalyses beta-D-fructose 1,6-bisphosphate + H2O = beta-D-fructose 6-phosphate + phosphate. The protein operates within carbohydrate biosynthesis; gluconeogenesis. The sequence is that of Fructose-1,6-bisphosphatase class 3 from Alkaliphilus metalliredigens (strain QYMF).